The sequence spans 426 residues: Cephalotocin receptor 2 (426 aa).

Topologically, residues 1-51 are extracellular; that stretch reads MYQAMEVESTSPSGFFLDFYTQSTIPTTDFLNNTNSSHPIRDEKLVKIEIA. N32 and N35 each carry an N-linked (GlcNAc...) asparagine glycan. The helical transmembrane segment at 52–72 threads the bilayer; the sequence is VLGTCFTLAIINNLCVLLVLL. Over 73–84 the chain is Cytoplasmic; it reads WRRKKVRRMQMF. Residues 85–105 traverse the membrane as a helical segment; the sequence is ILHLSIADLIVAFFNILPQLI. Residues 106–120 lie on the Extracellular side of the membrane; the sequence is WDITFRFMAGDAMCR. A disulfide bridge links C119 with C198. Residues 121-141 form a helical membrane-spanning segment; it reads FIKYAQMFSLYLSTYILIMTA. Over 142-165 the chain is Cytoplasmic; it reads VDRYRAICHPLSNQTWTPCMVYCK. The helical transmembrane segment at 166-186 threads the bilayer; the sequence is IFIAYAIATIFSIPQAILFQM. The Extracellular portion of the chain corresponds to 187–208; it reads QEVNEGSGIYDCWVHFEPAWVL. Residues 209-229 form a helical membrane-spanning segment; that stretch reads TAYALYIFFALYLIPILILFF. Residues 230 to 288 are Cytoplasmic-facing; the sequence is TYGSICYTIWAKYRHAIKTKKDANTRYPQRRKKKGVILRTHSVHGFSKAKLNSVKLTFA. A helical membrane pass occupies residues 289-309; sequence VIVTYIICWSPFFVSQIWWLF. At 310-319 the chain is on the extracellular side; that stretch reads DETVVGNAGV. Residues 320–340 traverse the membrane as a helical segment; sequence VVILLMACLNSCTNPWIYLIF. The Cytoplasmic portion of the chain corresponds to 341 to 426; that stretch reads NRNYISNVLP…DQFIYSDKTT (86 aa). The disordered stretch occupies residues 373–426; that stretch reads GSVRRDSRKTSDPKRISESRRISDARRISGKTQKNNSSSPRKTSDQFIYSDKTT. A compositionally biased stretch (basic and acidic residues) spans 375-399; sequence VRRDSRKTSDPKRISESRRISDARR. Polar residues predominate over residues 402-426; sequence GKTQKNNSSSPRKTSDQFIYSDKTT.

This sequence belongs to the G-protein coupled receptor 1 family. Vasopressin/oxytocin receptor subfamily. Present in various peripheral tissues with highest expression in branchia and vas deferens. Very low expression detected in nervous system.

Its subcellular location is the cell membrane. Its function is as follows. Acts as a receptor for cephalotocin. This Octopus vulgaris (Common octopus) protein is Cephalotocin receptor 2.